Reading from the N-terminus, the 658-residue chain is Threonine--tRNA ligase (658 aa).

In terms of domain architecture, TGS spans Met1 to Thr64. The segment at Asp246–Pro548 is catalytic. Zn(2+)-binding residues include Cys343, His394, and His525.

It belongs to the class-II aminoacyl-tRNA synthetase family. Homodimer. It depends on Zn(2+) as a cofactor.

The protein localises to the cytoplasm. The catalysed reaction is tRNA(Thr) + L-threonine + ATP = L-threonyl-tRNA(Thr) + AMP + diphosphate + H(+). In terms of biological role, catalyzes the attachment of threonine to tRNA(Thr) in a two-step reaction: L-threonine is first activated by ATP to form Thr-AMP and then transferred to the acceptor end of tRNA(Thr). Also edits incorrectly charged L-seryl-tRNA(Thr). The sequence is that of Threonine--tRNA ligase from Brucella abortus (strain S19).